A 296-amino-acid chain; its full sequence is Nucleotide-binding protein SPJ_1472 (296 aa).

13–20 (GMSGAGKT) lines the ATP pocket. Residue 63-66 (DMRS) coordinates GTP.

It belongs to the RapZ-like family.

Functionally, displays ATPase and GTPase activities. The sequence is that of Nucleotide-binding protein SPJ_1472 from Streptococcus pneumoniae (strain JJA).